A 234-amino-acid polypeptide reads, in one-letter code: uncharacterized protein (234 aa).

The next 4 helical transmembrane spans lie at 28 to 48 (IVII…SIIS), 67 to 87 (FQIF…FDPI), 123 to 143 (GGVD…SGTI), and 154 to 174 (LYCI…GLLY).

Belongs to the complex I subunit 2 family.

It is found in the mitochondrion membrane. This is an uncharacterized protein from Neurospora crassa (strain ATCC 24698 / 74-OR23-1A / CBS 708.71 / DSM 1257 / FGSC 987).